A 154-amino-acid chain; its full sequence is Myoglobin (154 aa).

A Globin domain is found at Gly2–Lys148. At Ser4 the chain carries Phosphoserine. Residue His65 coordinates nitrite. His65 is a binding site for O2. Thr68 carries the phosphothreonine modification. His94 is a binding site for heme b.

It belongs to the globin family. Monomeric.

Its subcellular location is the cytoplasm. It localises to the sarcoplasm. It carries out the reaction Fe(III)-heme b-[protein] + nitric oxide + H2O = Fe(II)-heme b-[protein] + nitrite + 2 H(+). It catalyses the reaction H2O2 + AH2 = A + 2 H2O. Functionally, monomeric heme protein which primary function is to store oxygen and facilitate its diffusion within muscle tissues. Reversibly binds oxygen through a pentacoordinated heme iron and enables its timely and efficient release as needed during periods of heightened demand. Depending on the oxidative conditions of tissues and cells, and in addition to its ability to bind oxygen, it also has a nitrite reductase activity whereby it regulates the production of bioactive nitric oxide. Under stress conditions, like hypoxia and anoxia, it also protects cells against reactive oxygen species thanks to its pseudoperoxidase activity. The protein is Myoglobin (MB) of Orcinus orca (Killer whale).